Consider the following 122-residue polypeptide: MARIAGIDLPRNKRIEIALTYIFGIGRTTAQRILAETGVSADTRTDNLAESEVAKIRDYIDKNLKVEGDLRRDVSMDIKRLMDLGCYRGLRHRKGLPVRGQRTKTNARTRKGPARTVAGKKK.

Positions 97–122 (PVRGQRTKTNARTRKGPARTVAGKKK) are disordered.

This sequence belongs to the universal ribosomal protein uS13 family. As to quaternary structure, part of the 30S ribosomal subunit. Forms a loose heterodimer with protein S19. Forms two bridges to the 50S subunit in the 70S ribosome.

Its function is as follows. Located at the top of the head of the 30S subunit, it contacts several helices of the 16S rRNA. In the 70S ribosome it contacts the 23S rRNA (bridge B1a) and protein L5 of the 50S subunit (bridge B1b), connecting the 2 subunits; these bridges are implicated in subunit movement. Contacts the tRNAs in the A and P-sites. This is Small ribosomal subunit protein uS13 from Geobacter sulfurreducens (strain ATCC 51573 / DSM 12127 / PCA).